The sequence spans 103 residues: Large ribosomal subunit protein uL24 (103 aa).

The protein belongs to the universal ribosomal protein uL24 family. In terms of assembly, part of the 50S ribosomal subunit.

Its function is as follows. One of two assembly initiator proteins, it binds directly to the 5'-end of the 23S rRNA, where it nucleates assembly of the 50S subunit. One of the proteins that surrounds the polypeptide exit tunnel on the outside of the subunit. In Geobacillus sp. (strain WCH70), this protein is Large ribosomal subunit protein uL24.